Consider the following 144-residue polypeptide: Large ribosomal subunit protein uL15 (144 aa).

Residues Met-1–Leu-57 are disordered. Over residues Arg-21–Gly-31 the composition is skewed to gly residues.

Belongs to the universal ribosomal protein uL15 family. In terms of assembly, part of the 50S ribosomal subunit.

Binds to the 23S rRNA. This is Large ribosomal subunit protein uL15 from Pseudomonas fluorescens (strain ATCC BAA-477 / NRRL B-23932 / Pf-5).